Consider the following 256-residue polypeptide: Acetyl-coenzyme A carboxylase carboxyl transferase subunit alpha (256 aa).

Positions 1-236 (MSDVARILKE…KTAIVDELAE (236 aa)) constitute a CoA carboxyltransferase C-terminal domain.

Belongs to the AccA family. In terms of assembly, acetyl-CoA carboxylase is a heterohexamer composed of biotin carboxyl carrier protein (AccB), biotin carboxylase (AccC) and two subunits each of ACCase subunit alpha (AccA) and ACCase subunit beta (AccD).

It is found in the cytoplasm. The catalysed reaction is N(6)-carboxybiotinyl-L-lysyl-[protein] + acetyl-CoA = N(6)-biotinyl-L-lysyl-[protein] + malonyl-CoA. The protein operates within lipid metabolism; malonyl-CoA biosynthesis; malonyl-CoA from acetyl-CoA: step 1/1. In terms of biological role, component of the acetyl coenzyme A carboxylase (ACC) complex. First, biotin carboxylase catalyzes the carboxylation of biotin on its carrier protein (BCCP) and then the CO(2) group is transferred by the carboxyltransferase to acetyl-CoA to form malonyl-CoA. In Streptococcus thermophilus (strain ATCC BAA-250 / LMG 18311), this protein is Acetyl-coenzyme A carboxylase carboxyl transferase subunit alpha.